The sequence spans 545 residues: Chaperonin GroEL 3 (545 aa).

ATP-binding positions include threonine 29 to proline 32, aspartate 86 to threonine 90, glycine 413, aspartate 479 to valine 481, and aspartate 495. A disordered region spans residues aspartate 526–tyrosine 545. Gly residues predominate over residues valine 535–tyrosine 545.

The protein belongs to the chaperonin (HSP60) family. Forms a cylinder of 14 subunits composed of two heptameric rings stacked back-to-back. Interacts with the co-chaperonin GroES.

The protein localises to the cytoplasm. It carries out the reaction ATP + H2O + a folded polypeptide = ADP + phosphate + an unfolded polypeptide.. Functionally, together with its co-chaperonin GroES, plays an essential role in assisting protein folding. The GroEL-GroES system forms a nano-cage that allows encapsulation of the non-native substrate proteins and provides a physical environment optimized to promote and accelerate protein folding. This is Chaperonin GroEL 3 from Trichormus variabilis (strain ATCC 29413 / PCC 7937) (Anabaena variabilis).